Consider the following 83-residue polypeptide: Mu-theraphotoxin-Hhn2p (83 aa).

Positions 1 to 21 (MKASMYLALAGLVLLFVVGYA) are cleaved as a signal peptide. Residues 22–48 (SESEEKEFPRELLSKIFAVDDFKGEER) constitute a propeptide that is removed on maturation. 3 disulfides stabilise this stretch: C50-C65, C57-C70, and C64-C77. L81 bears the Leucine amide mark.

The protein belongs to the neurotoxin 10 (Hwtx-1) family. 15 (Hntx-3) subfamily. In terms of assembly, monomer. Expressed by the venom gland.

The protein localises to the secreted. In terms of biological role, lethal neurotoxin. Selectively blocks tetrodotoxin-sensitive voltage-gated sodium channels (Nav). Does not affect tetrodotoxin-resistant voltage-gated sodium channels or calcium channels. The sequence is that of Mu-theraphotoxin-Hhn2p from Cyriopagopus hainanus (Chinese bird spider).